The sequence spans 436 residues: Aminotransferase tdiD (436 aa).

Positions 30, 86, 148, and 202 each coordinate substrate. N6-(pyridoxal phosphate)lysine is present on K270. Substrate is bound at residue R407.

The protein belongs to the class-I pyridoxal-phosphate-dependent aminotransferase family. Requires pyridoxal 5'-phosphate as cofactor.

The enzyme catalyses 3-phenylpyruvate + L-tryptophan = indole-3-pyruvate + L-phenylalanine. It functions in the pathway secondary metabolite biosynthesis. Its function is as follows. Aminotransferase; part of the gene cluster that mediates the biosynthesis of terrequinone A, an antitumor agent. The first step in the biosynthetic pathway for terrequinone A is formation of indole pyruvic acid (IPA) from L-tryptophan by the aminotransferase tdiD. The nonribosomal peptide synthase tdiA then immediately converts unstable IPA to didemethylasterriquinone D (DDAQ D), via condensation of 2 IPA molecules. The symmetric connectivity of the 2 IPA molecules is thought to arise by head-to-tail dual Claisen condensations facilitated by the TE domain. TdiB then catalyzes reverse prenylation by transferring dimethylallyl diphosphate to carbon atom 2' of DDAQ D, to yield asterriquinone C-1. Finally, tdiC and tdiE enzymes robustly convert asterriquinone C-1 to terrequinone A via a transformation involving regular prenylation at carbon atom 5, which requires elimination of the hydroxy group on C-5. This Emericella nidulans (strain FGSC A4 / ATCC 38163 / CBS 112.46 / NRRL 194 / M139) (Aspergillus nidulans) protein is Aminotransferase tdiD.